We begin with the raw amino-acid sequence, 164 residues long: Glutamate uptake regulatory protein (164 aa).

Positions 5-66 (LDDFDIKILD…LLDPQKIGLG (62 aa)) constitute an HTH asnC-type domain. The segment at residues 24-43 (MAELSEKTGLSANACWRRIR) is a DNA-binding region (H-T-H motif).

Its function is as follows. Represses the secondary, H(+)-coupled glutamate uptake system (Gluemp) genes. This chain is Glutamate uptake regulatory protein (grp), found in Zymomonas mobilis subsp. mobilis (strain ATCC 10988 / DSM 424 / LMG 404 / NCIMB 8938 / NRRL B-806 / ZM1).